The following is a 2278-amino-acid chain: MSSEEPHASISFPDGSHVRSSSTGTSSVNTIDATLSRPNYIKKPSLHIMSTSTTSTTTDLVTNPILSNISVPKISPPTSSSIATATSTSHVTGTASHSNIKANANTSTSVNKKNLPPTTSGRIPSSTIKRYPSRYKPSHSLQLPIKNDSNFKRSSIYASKSTVTAIPIRNNRPISMQNSYARTPDSDHDDVGDEVSSIKSASSSLTASLSKSFLFAFYNNRKKDKTSNNGVLSKEYWMKDESSKECFSCGKTFNTFRRKHHCRICGQIFCSSCTLLIDGDRFGCHAKMRVCYNCYEHADTYEDSSDEENDSTMQLNEPRSRSRSRSSNTNPYSHSHSHLHLISQDNHNGTDLHDPVAATDNPQQQNEVYLLNDDDVQSIMTSGEDSKLFISTPPPPPKMAIPATKQGGSLEISFDSENDRALHYQDDNPGRHHHLDSVPTRYTIRDMDNISHYDTNSNSTLRPHYNTNNSTITINNLNNTTSNNSNYNNTNSNSNINNPAHSLRRSIFHYVSSNSVNKDSNNSSATPASSAQSSSILDPANRIIGNYAHRNYKFKFNYNSKGPSQQNDTANGNNDNNNNNNNNNNNNNNNSASGIADNNNIPSNDNGTTFTLDKKKRNPLTKSKSTSAYLEYPLNEEDSSEDEGSMSIYSVLNDDHKTDNPIRSMRNSTKSFQRAQASLQRMRFRRKSKSKHFPNNSKSSIYRDLNFLTNSTPNLLSVVSDDNLYDDSSPLQDKASSSAASRLTDRKFSNSSGSNNNSNSNSNINTDPWKRIASISGFKLKKEKKRELNEVSLLHMHALLKQLLNDQEISNLQEWITLLDGALRKVLRTILNARDLNTLDFRQTYVKIKRISGGSPQNSEYIDGVVFSKALPSKTMPRHLKNPRILLIMFPLEYQKNNNHFLSIESVFRQEREYLDKLVSRLKSLHPDIIYVGANVSGYALELLNDSGIVVQFNMKPQVIERIAKLTEADIAISVDKLATNIKMGECETFEVKSYIYGNISKTYTFLRGCNPELGGTILLRGDSLENLRKIKQVSEFMVYAIFSLKLESSFFNDNFIQLSTDVYLKRAESKKLQVFEGYFADFLIKFNNRILTVSPTVDFPIPFLLEKARGLEKKLIERINQYESESDLDRQTQLNMLQGLESTITKKHLGNLIKFLHEMEIENLELEFQKRSRQWEVSYSSSQNLLGTGSHQSITVLYSMVSTKTATPCVGPQIVTIDYFWDSDISIGQFIENVVGTARYPCQQGCNGLYLDHYRSYVHGSGKVDVLIEKFQTRLPKLKDIILTWSYCKKCGTSTPILQISEKTWNHSFGKYLEVMFWSYKDSVTGIGKCPHDFTKDHVKYFGYNDLVVRLEYSDLEVHELITPPRKIKWKPHIDIKLKVELYYKILEKINNFYGSVLSRLERIKLDSMTKDKVLSGQAKIIELKSNATEEQKLMLQDLDTFYADSPCDQHLPLNLVIKSLYDKAVNWNSTFAIFAKSYLPSETDISRITAKQLKKLFYDSSRKDSEDKKSLHDEKAKTRKPEKNELPLEGLKDVEKPKIDSKNTTENRDRTNEPQNAVTITTFKDDTPIIPTSGTSHLTVTPSASSVSSSLTPQTEERPPISRSGTGISMTHDKSTRPNIRKMSSDSSLCGLASLANEYSKNNKVSKLATFFDQMHFDALSKEFELERERERLQLNKDKYQAIRLQTSTPIVEIYKNVKDAVDEPLHSRSSGNNLSSANVKTLEAPVGEHSRANNCNPPNLDQNLETELENSISQWGENILNPSGKTTASTHLNSKPVVKETSENPKSIVRESDNSKSEPLPPVITTTTVNKVESTPQPEKSLLMKTLSNFWADRSAYLWKPLVYPTCPSEHIFTDSDVIIREDEPSSLIAFCLSTSDYRNKMMNLNVQQQQQQQTAEAAPAKTGGNSGGTTQTGDPSVNISPSVSTTSHNKGRDSEISSLVTTKEGLLNTPPIEGARDRTPQESQTHSQANLDTLQELEKIMTKKTATHLRYQFEEGLTVMSCKIFFTEHFDVFRKICDCQENFIQSLSRCVKWDSNGGKSGSGFLKTLDDRFIIKELSHAELEAFIKFAPSYFEYMAQAMFHDLPTTLAKVFGFYQIQVKSSISSSKSYKMDVIIMENLFYEKKTTRIFDLKGSMRNRHVEQTGKANEVLLDENMVEYIYESPIHVREYDKKLLRASVWNDTLFLAKMNVMDYSLVIGIDNEGYTLTVGIIDFIRTFTWDKKLESWVKEKGLVGGASVIKQPTVVTPRQYKKRFREAMERYILMVPDPWYREGN.

Disordered stretches follow at residues 1-30 (MSSE…SVNT) and 76-144 (PPTS…LQLP). The residue at position 2 (serine 2) is an N-acetylserine. The segment at 2-676 (SSEEPHASIS…NSTKSFQRAQ (675 aa)) is required for localization to the vacuole membrane. Composition is skewed to low complexity over residues 18–28 (VRSSSTGTSSV) and 76–89 (PPTS…TSTS). Residues 90–128 (HVTGTASHSNIKANANTSTSVNKKNLPPTTSGRIPSSTI) show a composition bias toward polar residues. Serine 186 carries the post-translational modification Phosphoserine. Residues 240 to 299 (DESSKECFSCGKTFNTFRRKHHCRICGQIFCSSCTLLIDGDRFGCHAKMRVCYNCYEHAD) form an FYVE-type zinc finger. Cysteine 246, cysteine 249, cysteine 262, cysteine 265, cysteine 270, cysteine 273, cysteine 291, and cysteine 294 together coordinate Zn(2+). 5 disordered regions span residues 302–337 (EDSS…HSHS), 472–500 (ITIN…NNPA), 514–534 (NSVN…AQSS), 556–697 (FNYN…PNNS), and 727–766 (DSSP…NINT). Residues 472–498 (ITINNLNNTTSNNSNYNNTNSNSNINN) are compositionally biased toward low complexity. Positions 557 to 570 (NYNSKGPSQQNDTA) are enriched in polar residues. Low complexity predominate over residues 571–601 (NGNNDNNNNNNNNNNNNNNNSASGIADNNNI). Polar residues predominate over residues 602-611 (PSNDNGTTFT). Acidic residues predominate over residues 634–644 (LNEEDSSEDEG). Over residues 665–679 (MRNSTKSFQRAQASL) the composition is skewed to polar residues. Basic residues predominate over residues 682-692 (MRFRRKSKSKH). Residues 729–741 (SPLQDKASSSAAS) show a composition bias toward polar residues. Low complexity predominate over residues 749 to 763 (SNSSGSNNNSNSNSN). The segment at 766-1039 (TDPWKRIASI…KIKQVSEFMV (274 aa)) is CCT domain. The interval 1181–1500 (SSSQNLLGTG…TAKQLKKLFY (320 aa)) is CCR domain. Residues 1506–1554 (DSEDKKSLHDEKAKTRKPEKNELPLEGLKDVEKPKIDSKNTTENRDRTN) show a composition bias toward basic and acidic residues. The interval 1506–1627 (DSEDKKSLHD…TRPNIRKMSS (122 aa)) is disordered. Residues 1555-1564 (EPQNAVTITT) show a composition bias toward polar residues. Residues 1580-1595 (LTVTPSASSVSSSLTP) are compositionally biased toward low complexity. 2 positions are modified to phosphoserine: serine 1627 and serine 1630. Residues 1766-1776 (SGKTTASTHLN) show a composition bias toward polar residues. 2 disordered regions span residues 1766-1804 (SGKT…EPLP) and 1891-1972 (QQQQ…THSQ). Basic and acidic residues predominate over residues 1780–1799 (VVKETSENPKSIVRESDNSK). Residues 1918–1932 (DPSVNISPSVSTTSH) show a composition bias toward polar residues. Positions 1932 to 2266 (HNKGRDSEIS…RFREAMERYI (335 aa)) constitute a PIPK domain. A Phosphoserine modification is found at serine 1938. Position 1953 is a phosphothreonine (threonine 1953).

Component of the PI(3,5)P2 regulatory complex, composed of ATG18, FIG4, FAB1, VAC14 and VAC7. VAC14 nucleates the assembly of the complex and serves as a scaffold. The cofactor is Mg(2+). Mn(2+) serves as cofactor.

The protein localises to the vacuole membrane. It is found in the endosome membrane. The catalysed reaction is a 1,2-diacyl-sn-glycero-3-phospho-(1D-myo-inositol-3-phosphate) + ATP = a 1,2-diacyl-sn-glycero-3-phospho-(1D-myo-inositol-3,5-bisphosphate) + ADP + H(+). It carries out the reaction 1,2-dihexadecanoyl-sn-glycero-3-phospho-(1D-myo-inositol-3-phosphate) + ATP = 1,2-dihexadecanoyl-sn-glycero-3-phospho-(1D-myo-inositol-3,5-phosphate) + ADP + H(+). Activated by VAC14 and VAC7. VAC14 acts as a specific osmotic response regulator. In terms of biological role, the PI(3,5)P2 regulatory complex regulates both the synthesis and turnover of phosphatidylinositol 3,5-bisphosphate (PtdIns(3,5)P2). Catalyzes the phosphorylation of phosphatidylinositol 3-phosphate on the fifth hydroxyl of the myo-inositol ring, to form phosphatidylinositol 3,5-bisphosphate. Required for endocytic-vacuolar pathway and nuclear migration. The product of the reaction, PI(3,5)P2 is an important regulator of vacuole homeostasis perhaps by controlling membrane flux to and/or from the vacuole. PI(3,5)P2 regulates the transition between trans-SNARE complex formation and vacuole membrane fusion. Hyperosmotic shock-induced increase in the levels of PtdIns(3,5)P2 requires the presence of VAC7, VAC14, and/or FIG4. The chain is 1-phosphatidylinositol 3-phosphate 5-kinase FAB1 from Saccharomyces cerevisiae (strain ATCC 204508 / S288c) (Baker's yeast).